The sequence spans 510 residues: MSTTTATPAGADDTVAAARTYQVRTFGCQMNVHDSERLSGLLEDAGYVRFDEAGRPEGSDAPVEPDVVVFNTCAVRENADNKLYGNLGHLAPVKERRPGMQIAVGGCLAQKDRGEIVRKAPWVDVVFGTHNVGSLPVLLERARHNAEAQVEILESLETFPSTLPTRRESPYAAWVSISVGCNNTCTFCIVPALRGKEKDRRPGDVLAEIEALVGEGVLEVTLLGQNVNTYGVEFGDKLAFGKLLRATGGIEGLERVRFTSPHPSSFTDDVVDAMAETPNVMPSLHMPLQSGSDRVLKAMRRSYRQSRFLGIIDRVRSSIPDAAITTDIIVGFPGETDEDFEQTLHVVEQARFSSAFTFQYSPRPGTPAATMGDQIPKRVVQERYERLTALQDRITYEDNQAQTGRTLEVLVAEGEGRKDAATRRLSGRAPDNRLVHFALPEGAQAPRPGDVATVTVTRGAPHYLEADDVSGFAVRRTRAGDAWEARQARPEPESTGPRPVGLGLPTLRRA.

An MTTase N-terminal domain is found at 19 to 144 (RTYQVRTFGC…LPVLLERARH (126 aa)). [4Fe-4S] cluster is bound by residues cysteine 28, cysteine 73, cysteine 107, cysteine 181, cysteine 185, and cysteine 188. Residues 167-397 (RESPYAAWVS…TALQDRITYE (231 aa)) form the Radical SAM core domain. The region spanning 400-470 (QAQTGRTLEV…PHYLEADDVS (71 aa)) is the TRAM domain. Positions 482–492 (AWEARQARPEP) are enriched in basic and acidic residues. A disordered region spans residues 482–510 (AWEARQARPEPESTGPRPVGLGLPTLRRA).

The protein belongs to the methylthiotransferase family. MiaB subfamily. As to quaternary structure, monomer. The cofactor is [4Fe-4S] cluster.

The protein localises to the cytoplasm. The enzyme catalyses N(6)-dimethylallyladenosine(37) in tRNA + (sulfur carrier)-SH + AH2 + 2 S-adenosyl-L-methionine = 2-methylsulfanyl-N(6)-dimethylallyladenosine(37) in tRNA + (sulfur carrier)-H + 5'-deoxyadenosine + L-methionine + A + S-adenosyl-L-homocysteine + 2 H(+). In terms of biological role, catalyzes the methylthiolation of N6-(dimethylallyl)adenosine (i(6)A), leading to the formation of 2-methylthio-N6-(dimethylallyl)adenosine (ms(2)i(6)A) at position 37 in tRNAs that read codons beginning with uridine. In Kineococcus radiotolerans (strain ATCC BAA-149 / DSM 14245 / SRS30216), this protein is tRNA-2-methylthio-N(6)-dimethylallyladenosine synthase.